The sequence spans 635 residues: Threonine--tRNA ligase (635 aa).

Positions 1–61 (MVSIRLPDGS…DRDASLAIVT (61 aa)) constitute a TGS domain. Positions 242–533 (DHRKLGKQLD…LIEHHAGAMP (292 aa)) are catalytic. The Zn(2+) site is built by Cys-333, His-384, and His-510.

It belongs to the class-II aminoacyl-tRNA synthetase family. As to quaternary structure, homodimer. Zn(2+) serves as cofactor.

Its subcellular location is the cytoplasm. The catalysed reaction is tRNA(Thr) + L-threonine + ATP = L-threonyl-tRNA(Thr) + AMP + diphosphate + H(+). Functionally, catalyzes the attachment of threonine to tRNA(Thr) in a two-step reaction: L-threonine is first activated by ATP to form Thr-AMP and then transferred to the acceptor end of tRNA(Thr). Also edits incorrectly charged L-seryl-tRNA(Thr). The chain is Threonine--tRNA ligase from Burkholderia vietnamiensis (strain G4 / LMG 22486) (Burkholderia cepacia (strain R1808)).